The following is a 101-amino-acid chain: Small ribosomal subunit protein uS14 (101 aa).

It belongs to the universal ribosomal protein uS14 family. In terms of assembly, part of the 30S ribosomal subunit. Contacts proteins S3 and S10.

In terms of biological role, binds 16S rRNA, required for the assembly of 30S particles and may also be responsible for determining the conformation of the 16S rRNA at the A site. The sequence is that of Small ribosomal subunit protein uS14 from Buchnera aphidicola subsp. Schizaphis graminum (strain Sg).